The following is a 78-amino-acid chain: Large ribosomal subunit protein bL28 (78 aa).

Belongs to the bacterial ribosomal protein bL28 family.

This is Large ribosomal subunit protein bL28 from Flavobacterium psychrophilum (strain ATCC 49511 / DSM 21280 / CIP 103535 / JIP02/86).